A 546-amino-acid polypeptide reads, in one-letter code: T-complex protein 1 subunit epsilon (546 aa).

Belongs to the TCP-1 chaperonin family. Heterooligomeric complex of about 850 to 900 kDa that forms two stacked rings, 12 to 16 nm in diameter.

The protein localises to the cytoplasm. Its function is as follows. Molecular chaperone; assists the folding of proteins upon ATP hydrolysis. Known to play a role, in vitro, in the folding of actin and tubulin. This is T-complex protein 1 subunit epsilon (cct5) from Schizosaccharomyces pombe (strain 972 / ATCC 24843) (Fission yeast).